Reading from the N-terminus, the 93-residue chain is Large ribosomal subunit protein uL23cz/uL23cy (93 aa).

It belongs to the universal ribosomal protein uL23 family. Part of the 50S ribosomal subunit.

Its subcellular location is the plastid. The protein resides in the chloroplast. Binds to 23S rRNA. In Nymphaea alba (White water-lily), this protein is Large ribosomal subunit protein uL23cz/uL23cy (rpl23-A).